The following is a 448-amino-acid chain: uncharacterized protein (448 aa).

ATP is bound at residue 257–264 (GRNAQGKT).

This is an uncharacterized protein from Methanocaldococcus jannaschii (strain ATCC 43067 / DSM 2661 / JAL-1 / JCM 10045 / NBRC 100440) (Methanococcus jannaschii).